The chain runs to 208 residues: Probable nicotinate-nucleotide adenylyltransferase (208 aa).

It belongs to the NadD family.

It carries out the reaction nicotinate beta-D-ribonucleotide + ATP + H(+) = deamido-NAD(+) + diphosphate. Its pathway is cofactor biosynthesis; NAD(+) biosynthesis; deamido-NAD(+) from nicotinate D-ribonucleotide: step 1/1. Its function is as follows. Catalyzes the reversible adenylation of nicotinate mononucleotide (NaMN) to nicotinic acid adenine dinucleotide (NaAD). The sequence is that of Probable nicotinate-nucleotide adenylyltransferase from Trichormus variabilis (strain ATCC 29413 / PCC 7937) (Anabaena variabilis).